Reading from the N-terminus, the 120-residue chain is Glycine cleavage system H protein (120 aa).

The Lipoyl-binding domain occupies 17 to 99; sequence VATVGITAHA…MGAGWFFKLK (83 aa). Lys58 carries the post-translational modification N6-lipoyllysine.

The protein belongs to the GcvH family. The glycine cleavage system is composed of four proteins: P, T, L and H. Requires (R)-lipoate as cofactor.

In terms of biological role, the glycine cleavage system catalyzes the degradation of glycine. The H protein shuttles the methylamine group of glycine from the P protein to the T protein. This chain is Glycine cleavage system H protein, found in Rhizobium rhizogenes (strain K84 / ATCC BAA-868) (Agrobacterium radiobacter).